The primary structure comprises 855 residues: DNA mismatch repair protein MutS (855 aa).

An ATP-binding site is contributed by 616-623 (GPNMGGKS).

The protein belongs to the DNA mismatch repair MutS family.

This protein is involved in the repair of mismatches in DNA. It is possible that it carries out the mismatch recognition step. This protein has a weak ATPase activity. This chain is DNA mismatch repair protein MutS, found in Salmonella paratyphi C (strain RKS4594).